The chain runs to 304 residues: Bifunctional protein FolD (304 aa).

Residues 170-172, S195, and I236 contribute to the NADP(+) site; that span reads GRS.

It belongs to the tetrahydrofolate dehydrogenase/cyclohydrolase family. As to quaternary structure, homodimer.

It catalyses the reaction (6R)-5,10-methylene-5,6,7,8-tetrahydrofolate + NADP(+) = (6R)-5,10-methenyltetrahydrofolate + NADPH. It carries out the reaction (6R)-5,10-methenyltetrahydrofolate + H2O = (6R)-10-formyltetrahydrofolate + H(+). It functions in the pathway one-carbon metabolism; tetrahydrofolate interconversion. Catalyzes the oxidation of 5,10-methylenetetrahydrofolate to 5,10-methenyltetrahydrofolate and then the hydrolysis of 5,10-methenyltetrahydrofolate to 10-formyltetrahydrofolate. The chain is Bifunctional protein FolD from Anaplasma phagocytophilum (strain HZ).